A 125-amino-acid polypeptide reads, in one-letter code: MORF4 family-associated protein 1 (125 aa).

Residues 76-99 (ESALNHLQGAGGAEPRGPRAEKAD) are disordered. The stretch at 94-124 (RAEKADEKAQEMAKMAEMLVQLVRRIEKSES) forms a coiled coil.

It belongs to the MORF4 family-associated protein family. Found in a complex composed of MORF4L1, MRFAP1 and RB1. Interacts via its N-terminus with MORF4L1. Interacts with CSTB and MORF4L2.

Its subcellular location is the nucleus. The protein localises to the cytoplasm. The protein resides in the perinuclear region. The sequence is that of MORF4 family-associated protein 1 from Rattus norvegicus (Rat).